A 556-amino-acid polypeptide reads, in one-letter code: Putative cysteine ligase BshC (556 aa).

2 coiled-coil regions span residues 408–442 and 468–513; these read ILQK…IAQA and LGQV…ANLT.

The protein belongs to the BshC family.

Functionally, involved in bacillithiol (BSH) biosynthesis. May catalyze the last step of the pathway, the addition of cysteine to glucosamine malate (GlcN-Mal) to generate BSH. This chain is Putative cysteine ligase BshC, found in Symbiobacterium thermophilum (strain DSM 24528 / JCM 14929 / IAM 14863 / T).